The sequence spans 789 residues: LPS-assembly protein LptD (789 aa).

A signal peptide spans 1–39; that stretch reads MPPRQLSQTTPSCAVVPRKRRLVAALIAVPGLMPALAHA.

The protein belongs to the LptD family. In terms of assembly, component of the lipopolysaccharide transport and assembly complex. Interacts with LptE and LptA.

The protein resides in the cell outer membrane. In terms of biological role, together with LptE, is involved in the assembly of lipopolysaccharide (LPS) at the surface of the outer membrane. This Paraburkholderia xenovorans (strain LB400) protein is LPS-assembly protein LptD.